Here is a 1397-residue protein sequence, read N- to C-terminus: MKDLLDIMRKKTDSDGHTPIEFDRIRIGLASPEMIKSWSHGEVKKPETINYRTFKPERDGLFCAKIFGPVKDYECLCGKYKRMKYKGVICEKCGVEVTTAKVRRERMGHIELASPVAHIWFLKSLPSRIGLLLDMTLRDIERVLYFESYVVTDPGMTPLEKYQLLTDEEYFNALEEHGDEFSAKMGAEAVQDLLKDIDLEAEISRLREEIPQTTSETKLKKASKRLKLMEAFKESNNKPEWMVMNVLPVLPPDLRPLVPLEGGRFATSDLNDLYRRVINRNNRLKRLLDLAAPDIIVRNEKRMLQESVDALLDNGRRGRAITGSNKRPLKSLADMIKGKQGRFRQNLLGKRVDYSGRSVITVGPTLRLHQCGLPKKMALELFKPFIFAKLQASGQATTIKAAKKMVERETPEVWDVLANVIRQHPVMLNRAPTLHRLGLQAFEPILIEGKAIRLHPLVCAAFNADFDGDQMAVHVPLTLEAQLEARALMMSTNNILSPANGEPIIVPSQDVVLGLYYITRDAVNAKGEGMMFADTHEVNRALATGQVAIHARVKVRVHQTVINEDGQREKQTIVVDTTPGRCLLWEVVPEGLSFEMINLEMTKKNISKLINSCYRKLGLKDTVIFADQLMYLGFRQATRSGVSVGMEDMVIPPQKQAIIDKAETEVREIEEQFEQGFVTAGERYNKVVDIWARTNDQVAKAMMDNLSFTNVKNKQGQDEKQKSFNSIYMMSDSGARGSAAQIRQLAGMRGLMAKPDGSIIETPIKANFREGLTVLQYFISTHGARKGLADTALKTANSGYLTRRLVDVAQDLVITEPDCGTMGGLVMTPFIQGGDVIEPLRDRVLGRVTAEDVRRASDNEIVLPRGTLIDEKIAAQLEEAGVDEVKVRSVIACESTFGVCAKCYGRDLARGHQVNPGESVGVMAAQSIGEPGTQLTMRTFHVGGAASRTSAANSVQVRNKGTVRFHNVKTVQHAKGHLVSVSRSGEIGIADELGRERERYKLPYGASILIKDGEAVEAGGIVATWDPHTHPLVTEVAGKARFSQIADGVTATSKTDDATGMTTVEILPVTARPASGKDLRPAIVLDTTDGGEQFYFLPQNTIVTVRDGETIGVGDVLGRVPQETSRTRDITGGLPRVADLFEARKPKEHAILAEVSGIVSFGKETKGKNRLVITPDDGSEIYEELIPKWRTINVFEGEHVNRGETISDGPQNPHDILRLKGEVALTNYIVNEVQDVYRLQGVKINDKHIEVIVRQMLRKVDITDGGDTSFIKGEQVDYIRVVQENQAVLAQNKFPAKFERQLMGITKASLSTDSFISAASFQETTRVLTEAAVTGKEDDLRGLKENVVVGRLIPAGTGLAYHLERRRQEAEAAEFELHNDFSEVDQAFSQALNQEQF.

Zn(2+)-binding residues include C75, C77, C90, and C93. Mg(2+)-binding residues include D465, D467, and D469. Zn(2+) is bound by residues C819, C893, C900, and C903.

It belongs to the RNA polymerase beta' chain family. In terms of assembly, the RNAP catalytic core consists of 2 alpha, 1 beta, 1 beta' and 1 omega subunit. When a sigma factor is associated with the core the holoenzyme is formed, which can initiate transcription. Mg(2+) is required as a cofactor. The cofactor is Zn(2+).

It catalyses the reaction RNA(n) + a ribonucleoside 5'-triphosphate = RNA(n+1) + diphosphate. Functionally, DNA-dependent RNA polymerase catalyzes the transcription of DNA into RNA using the four ribonucleoside triphosphates as substrates. This chain is DNA-directed RNA polymerase subunit beta', found in Acinetobacter baylyi (strain ATCC 33305 / BD413 / ADP1).